A 225-amino-acid chain; its full sequence is 2-amino-5-formylamino-6-ribosylaminopyrimidin-4(3H)-one 5'-monophosphate deformylase (225 aa).

4 residues coordinate Fe cation: Glu28, His30, Asp39, and His107.

It belongs to the creatininase superfamily. FAPy deformylase family. Homodimer. Fe(2+) is required as a cofactor. It depends on Zn(2+) as a cofactor.

The catalysed reaction is 2-amino-5-formylamino-6-(5-phospho-D-ribosylamino)pyrimidin-4(3H)-one + H2O = 2,5-diamino-6-(1-D-ribosylamino)pyrimidin-4(3H)-one 5'-phosphate + formate + H(+). Its pathway is cofactor biosynthesis; coenzyme F420 biosynthesis. The protein operates within cofactor biosynthesis; riboflavin biosynthesis. Catalyzes the hydrolysis of the formamide of 2-amino-5-formylamino-6-ribosylamino-4(3H)-pyrimidinone 5'-monophosphate (FAPy) to form 2,5-diamino-6-ribosylamino-4(3H)-pyrimidinone 5'-phosphate (APy). The chain is 2-amino-5-formylamino-6-ribosylaminopyrimidin-4(3H)-one 5'-monophosphate deformylase from Methanocaldococcus fervens (strain DSM 4213 / JCM 15782 / AG86) (Methanococcus fervens).